The chain runs to 271 residues: DNA repair protein RecO (271 aa).

A compositionally biased stretch (basic and acidic residues) spans 249–264 (VRVEDSVRQDGDRDST). A disordered region spans residues 249 to 271 (VRVEDSVRQDGDRDSTTRTSSPA).

It belongs to the RecO family.

Involved in DNA repair and RecF pathway recombination. The polypeptide is DNA repair protein RecO (Rhodococcus jostii (strain RHA1)).